Reading from the N-terminus, the 197-residue chain is Holliday junction branch migration complex subunit RuvA (197 aa).

The tract at residues 1–63 is domain I; it reads MFDYIKGQLT…EDAHLLFGFH (63 aa). The segment at 64-142 is domain II; it reads TENEKDVFLK…TIPEGGQAQQ (79 aa). The segment at 142–146 is flexible linker; sequence QMPKA. Residues 147–197 form a domain III region; sequence KGNQQLDEAIEALLALGYKATELKKIRAFFEGTDDTAEQYIKSALKMLMKG.

This sequence belongs to the RuvA family. Homotetramer. Forms an RuvA(8)-RuvB(12)-Holliday junction (HJ) complex. HJ DNA is sandwiched between 2 RuvA tetramers; dsDNA enters through RuvA and exits via RuvB. An RuvB hexamer assembles on each DNA strand where it exits the tetramer. Each RuvB hexamer is contacted by two RuvA subunits (via domain III) on 2 adjacent RuvB subunits; this complex drives branch migration. In the full resolvosome a probable DNA-RuvA(4)-RuvB(12)-RuvC(2) complex forms which resolves the HJ.

The protein resides in the cytoplasm. The RuvA-RuvB-RuvC complex processes Holliday junction (HJ) DNA during genetic recombination and DNA repair, while the RuvA-RuvB complex plays an important role in the rescue of blocked DNA replication forks via replication fork reversal (RFR). RuvA specifically binds to HJ cruciform DNA, conferring on it an open structure. The RuvB hexamer acts as an ATP-dependent pump, pulling dsDNA into and through the RuvAB complex. HJ branch migration allows RuvC to scan DNA until it finds its consensus sequence, where it cleaves and resolves the cruciform DNA. The chain is Holliday junction branch migration complex subunit RuvA from Streptococcus uberis (strain ATCC BAA-854 / 0140J).